We begin with the raw amino-acid sequence, 172 residues long: Shikimate kinase (172 aa).

Residue 17-22 (GTGKST) participates in ATP binding. Ser21 provides a ligand contact to Mg(2+). Residues Asp39, Arg63, and Gly84 each coordinate substrate. Residue Arg122 coordinates ATP. Substrate is bound at residue Arg140.

It belongs to the shikimate kinase family. In terms of assembly, monomer. The cofactor is Mg(2+).

It localises to the cytoplasm. The enzyme catalyses shikimate + ATP = 3-phosphoshikimate + ADP + H(+). Its pathway is metabolic intermediate biosynthesis; chorismate biosynthesis; chorismate from D-erythrose 4-phosphate and phosphoenolpyruvate: step 5/7. Functionally, catalyzes the specific phosphorylation of the 3-hydroxyl group of shikimic acid using ATP as a cosubstrate. This chain is Shikimate kinase, found in Staphylococcus haemolyticus (strain JCSC1435).